The sequence spans 398 residues: Phosphoglycerate kinase (398 aa).

Substrate is bound by residues 21-23, Arg-36, 59-62, Arg-119, and Arg-157; these read DFN and HLGR. Residues Lys-208, Gly-296, Glu-327, and 354-357 contribute to the ATP site; that span reads GGDS.

Belongs to the phosphoglycerate kinase family. Monomer.

The protein resides in the cytoplasm. The enzyme catalyses (2R)-3-phosphoglycerate + ATP = (2R)-3-phospho-glyceroyl phosphate + ADP. It participates in carbohydrate degradation; glycolysis; pyruvate from D-glyceraldehyde 3-phosphate: step 2/5. This is Phosphoglycerate kinase from Streptococcus pneumoniae (strain Taiwan19F-14).